Reading from the N-terminus, the 478-residue chain is Trigger factor (478 aa).

In terms of domain architecture, PPIase FKBP-type spans 162–243 (GDFVSIDLSA…VKSIKERELP (82 aa)). Positions 424-478 (KDTDGNDIDTTEFFGPSGGAQAEAEGADEADADSDADSDTEADSDTEADEADEAK) are disordered. Acidic residues predominate over residues 448-478 (EGADEADADSDADSDTEADSDTEADEADEAK).

It belongs to the FKBP-type PPIase family. Tig subfamily.

It localises to the cytoplasm. It carries out the reaction [protein]-peptidylproline (omega=180) = [protein]-peptidylproline (omega=0). In terms of biological role, involved in protein export. Acts as a chaperone by maintaining the newly synthesized protein in an open conformation. Functions as a peptidyl-prolyl cis-trans isomerase. In Mycobacterium sp. (strain KMS), this protein is Trigger factor.